The chain runs to 547 residues: Flagellar hook-associated protein 1 (547 aa).

This sequence belongs to the flagella basal body rod proteins family.

It is found in the secreted. The protein resides in the bacterial flagellum. The chain is Flagellar hook-associated protein 1 (flgK) from Escherichia coli (strain K12).